The primary structure comprises 348 residues: Uroporphyrinogen decarboxylase (348 aa).

Substrate contacts are provided by residues arginine 27 to arginine 31, phenylalanine 46, aspartate 76, tyrosine 152, serine 207, and histidine 320.

It belongs to the uroporphyrinogen decarboxylase family. Homodimer.

The protein resides in the cytoplasm. The enzyme catalyses uroporphyrinogen III + 4 H(+) = coproporphyrinogen III + 4 CO2. It functions in the pathway porphyrin-containing compound metabolism; protoporphyrin-IX biosynthesis; coproporphyrinogen-III from 5-aminolevulinate: step 4/4. Catalyzes the decarboxylation of four acetate groups of uroporphyrinogen-III to yield coproporphyrinogen-III. The polypeptide is Uroporphyrinogen decarboxylase (Bacillus cereus (strain B4264)).